We begin with the raw amino-acid sequence, 369 residues long: Histidinol-phosphate aminotransferase 2 (369 aa).

Lys231 is modified (N6-(pyridoxal phosphate)lysine).

This sequence belongs to the class-II pyridoxal-phosphate-dependent aminotransferase family. Histidinol-phosphate aminotransferase subfamily. In terms of assembly, homodimer. The cofactor is pyridoxal 5'-phosphate.

The catalysed reaction is L-histidinol phosphate + 2-oxoglutarate = 3-(imidazol-4-yl)-2-oxopropyl phosphate + L-glutamate. The protein operates within amino-acid biosynthesis; L-histidine biosynthesis; L-histidine from 5-phospho-alpha-D-ribose 1-diphosphate: step 7/9. The sequence is that of Histidinol-phosphate aminotransferase 2 from Legionella pneumophila subsp. pneumophila (strain Philadelphia 1 / ATCC 33152 / DSM 7513).